The following is a 386-amino-acid chain: uncharacterized protein (386 aa).

At Lys-185 the chain carries N6-(pyridoxal phosphate)lysine.

It belongs to the DegT/DnrJ/EryC1 family. The cofactor is pyridoxal 5'-phosphate.

This is an uncharacterized protein from Methanocaldococcus jannaschii (strain ATCC 43067 / DSM 2661 / JAL-1 / JCM 10045 / NBRC 100440) (Methanococcus jannaschii).